The sequence spans 321 residues: ATP-dependent 6-phosphofructokinase (321 aa).

Position 12 (Gly-12) interacts with ATP. ADP contacts are provided by residues 22-26 (RGVVR) and 55-60 (RYSVSD). Residues 73-74 (RF) and 103-106 (GDGS) each bind ATP. Residue Asp-104 participates in Mg(2+) binding. Substrate is bound at residue 127-129 (TID). The Proton acceptor role is filled by Asp-129. Residue Arg-156 participates in ADP binding. Substrate-binding positions include Arg-164 and 171–173 (MGR). ADP contacts are provided by residues 187–189 (GCE), Arg-213, and 215–217 (KRH). Substrate-binding positions include Glu-224, Arg-245, and 251-254 (HIQR).

The protein belongs to the phosphofructokinase type A (PFKA) family. ATP-dependent PFK group I subfamily. Prokaryotic clade 'B1' sub-subfamily. In terms of assembly, homotetramer. Mg(2+) is required as a cofactor.

The protein localises to the cytoplasm. It catalyses the reaction beta-D-fructose 6-phosphate + ATP = beta-D-fructose 1,6-bisphosphate + ADP + H(+). Its pathway is carbohydrate degradation; glycolysis; D-glyceraldehyde 3-phosphate and glycerone phosphate from D-glucose: step 3/4. Its activity is regulated as follows. Allosterically activated by ADP and other diphosphonucleosides, and allosterically inhibited by phosphoenolpyruvate. Functionally, catalyzes the phosphorylation of D-fructose 6-phosphate to fructose 1,6-bisphosphate by ATP, the first committing step of glycolysis. The protein is ATP-dependent 6-phosphofructokinase of Haemophilus influenzae (strain 86-028NP).